The following is a 229-amino-acid chain: Putative N-acetylmannosamine-6-phosphate 2-epimerase (229 aa).

The protein belongs to the NanE family.

The enzyme catalyses an N-acyl-D-glucosamine 6-phosphate = an N-acyl-D-mannosamine 6-phosphate. The protein operates within amino-sugar metabolism; N-acetylneuraminate degradation; D-fructose 6-phosphate from N-acetylneuraminate: step 3/5. Functionally, converts N-acetylmannosamine-6-phosphate (ManNAc-6-P) to N-acetylglucosamine-6-phosphate (GlcNAc-6-P). This Actinobacillus pleuropneumoniae serotype 5b (strain L20) protein is Putative N-acetylmannosamine-6-phosphate 2-epimerase.